Here is a 1889-residue protein sequence, read N- to C-terminus: MPPPPRNSSSASLSATPGLAKGPNNNWPTHLRHFRRSSHDRSLEHAYSNSPGDTVSSNSTIRERPSSRLSSRLRTERRWTVTVNESLARDEVLLNLDLIGDDIQPGSLVAIDVVKADSEKPLQNSHPRHFQDRKDSATAGCVERRYICVAKDMPKELKARYASVEVYVAKHVADAFAMRKGTQVTLTPIDENNPALEASHVELCFKDQYLSRADMWRMAVGELAERTVYKGQMVLFMGTVKAQVTAVYVDGRKAQSAFFGRHTKPVFRSESARYVLFIQMAREMWDFDQDGSGEIMFNKVVNGFLPALFKKWAAMKVKHLVTIVLFARVEYDTGISTELASASAHHGYYTGVQASEDQRPYKDFYRVVVSEMGSGEWTRILHQLKREFNYFRKDISTYHQKAMEPTNSGEDSGEQEVLLNRIKAEASRAIHGNFLEAINMASSLYAHDYIDRDLTRTGVSVVVISPSPGVFEVEYDALRRTTEALACNGIGIDLICIPNIPLHSVPLFRYRNPRQPGQVQRKSKVDISQGSTPKQTTLTFGSYSSLAGSYSPNKRIEGSRNGEPAGPLSSQEEWVSAIPQWLHVSYWTGASEEELSYQGIALSVSDATQKLPSDEFPIRCRMYDLQMRSVMETNEIETKPLHTDPCYPLNAVLASQISKPHFDLDNDGNVIIPNARVPETLFDHVFGFQKFAPDRHRKPGEKSIWRQLQEYDDCRARLPSHRNANQTRRCRDHEETPRRQALEDTSPLGTSYTDRRPSTASQQTLPELSPYHRPTSQRLEVPPVNRKSMSAQSNKSEPKASSSPLKAPKFMRHISLGNRGFGIAAPKVATAEVSMESAGASKTLTPSRSSQDLRVTPSKPGQRPSSSRRLTGGTSTSALSPALSPFSFAPGPQFPTDSPTRPIVIRNQQLEPAAMLSGSSILATTLRPEPVGHDRDFRYSNAIRAEDAKKLYNSKLLAGAIPELPSTLSPKTALSPWLTVLNPSNPDTNDVDMAMLYSRWQHVFPRPQEMRIMKWKGLCSPAAVPLTSEYFPSRDQFEAQYERQPYNVSQDFDEELQEEPKSRDELLRELVSLRFSQGFQIVVGPAVAKAFGQKQVKVADIFSRNHMMEDGISIFMSVGNTIHQLSCVNGTEVEVNIFVRKPTDSFGPSFSSPTLYKPAIRTLLDGGYRTSEFDLVAPKAERNWNYIDAFIAGHNDELTEHLRFWRARFVLIPMTGRRSSMPGTETGDNEEEIRIEGIRKLAQMWQKHRYVPPNERRLQGSGSTRSKKDTNPLDIVYKTEDASVVIAAELETLPLLEGLDRKGQLVRNREPFSKKNINLAALAEAMQQPVENGGVRMQNRRWHFRLHYNCFIGSDMTSWLLDNFDDLEDREEAEALGKRLMVPDDKEKEGKKDSGLFVHVEKRHQFRDGQYFYQISNEFAKPHPPGWFNAKRGQGSMPSTPMGEQPPRDGRPSFSRPTSIHEEDSPESGETTPTAPQAPAGNKPKVVLSRVIKYDVDHRKRSYRPEMVELHYDRLHNPDNCYHLRIDWMNVTVQKLVEDVIENWAREAGQYGLRLVEVPIAEASAISEINPFRRPYKIKLAVPPPDQSPVTYYDPTSFTPQAHPGRQFYQKAILRRFDFVLDMEAASNFPSNVDVSYSWGRPDFRYTQYIHRSGSILAEITDDGHFLVLANRLYSSRAFAAREREMQKELRVERQEQGPAIGTPGLGSSIRVITPSSYTPYNIPTPLPPYDSSPVASPALRPVTTTTTATTTTAAPTSSSLLSPVVRPTLSAPGTTPGSTSASGTPGLTHTPNQGQPGKPPSTSATTTTACAGGGGPGSGWSTWTTREPEWIKDELENFCLDAAALEAFYRELRTAARATTSAGRCGHDAGFWCGWRWCWCWGWAREWD.

Disordered stretches follow at residues 1–74, 515–540, 551–570, 716–808, 838–900, and 1252–1272; these read MPPP…SRLR, QPGQ…TLTF, SPNK…PLSS, ARLP…LKAP, AGAS…DSPT, and PPNE…DTNP. A compositionally biased stretch (polar residues) spans 47–60; that stretch reads YSNSPGDTVSSNST. Residues 729-742 are compositionally biased toward basic and acidic residues; sequence RCRDHEETPRRQAL. 3 stretches are compositionally biased toward polar residues: residues 747-766, 787-804, and 840-853; these read PLGT…QTLP, KSMS…SSSP, and ASKT…SQDL. The span at 865-877 shows a compositional bias: low complexity; that stretch reads SSSRRLTGGTSTS. Positions 1331-1417 constitute a DEP domain; it reads ENGGVRMQNR…DGQYFYQISN (87 aa). Disordered stretches follow at residues 1424–1484 and 1724–1824; these read PPGW…GNKP and PTPL…WSTW. Low complexity-rich tracts occupy residues 1737 to 1789 and 1801 to 1811; these read SPAL…PGLT and PSTSATTTTAC.

This sequence belongs to the IML1 family.

The protein localises to the vacuole membrane. This Chaetomium globosum (strain ATCC 6205 / CBS 148.51 / DSM 1962 / NBRC 6347 / NRRL 1970) (Soil fungus) protein is Vacuolar membrane-associated protein IML1 (IML1).